A 225-amino-acid chain; its full sequence is ATP-dependent dethiobiotin synthetase BioD (225 aa).

G12–V17 is a binding site for ATP. T16 is a Mg(2+) binding site. The active site involves K37. T41 serves as a coordination point for substrate. Residues D46, E105–G108, G166–S167, and P196–G198 contribute to the ATP site. The Mg(2+) site is built by D46 and E105.

This sequence belongs to the dethiobiotin synthetase family. Homodimer. The cofactor is Mg(2+).

It localises to the cytoplasm. The catalysed reaction is (7R,8S)-7,8-diammoniononanoate + CO2 + ATP = (4R,5S)-dethiobiotin + ADP + phosphate + 3 H(+). It functions in the pathway cofactor biosynthesis; biotin biosynthesis; biotin from 7,8-diaminononanoate: step 1/2. Catalyzes a mechanistically unusual reaction, the ATP-dependent insertion of CO2 between the N7 and N8 nitrogen atoms of 7,8-diaminopelargonic acid (DAPA, also called 7,8-diammoniononanoate) to form a ureido ring. The chain is ATP-dependent dethiobiotin synthetase BioD from Mycobacteroides abscessus (strain ATCC 19977 / DSM 44196 / CCUG 20993 / CIP 104536 / JCM 13569 / NCTC 13031 / TMC 1543 / L948) (Mycobacterium abscessus).